The following is a 60-amino-acid chain: U-actitoxin-Avd12b (60 aa).

The signal sequence occupies residues 1–6; sequence SKEGMS. Positions 7–12 are excised as a propeptide; it reads YEEPEN. In terms of domain architecture, EGF-like spans 14 to 56; the sequence is EGVACTGQYAESFCLNGGTCRYIQSIGEYYCICVGDYTGHRCE. Intrachain disulfides connect Cys-18-Cys-33, Cys-27-Cys-44, and Cys-46-Cys-55.

It belongs to the EGF domain peptide family.

The protein resides in the secreted. It localises to the nematocyst. In terms of biological role, has both toxic and EGF activity. Its EGF activity consists of rounding cells (morphological change) and inducing tyrosine phosphorylation of the EGFR in A431 cells, but with a lower potency that human EGF. The chain is U-actitoxin-Avd12b from Anemonia viridis (Snakelocks anemone).